The primary structure comprises 231 residues: Putative S-adenosylmethionine-dependent methyltransferase RcsF (231 aa).

Residues 5–142 (VSPIGYIRSC…YVPYADAVAD (138 aa)) enclose the TsaA-like domain. S-adenosyl-L-methionine is bound by residues 22-24 (PRQ), 63-64 (HQ), Arg-91, and 122-125 (LDGT).

Belongs to the tRNA methyltransferase O family.

The chain is Putative S-adenosylmethionine-dependent methyltransferase RcsF (rcsF) from Pseudomonas aeruginosa (strain ATCC 15692 / DSM 22644 / CIP 104116 / JCM 14847 / LMG 12228 / 1C / PRS 101 / PAO1).